Consider the following 415-residue polypeptide: Protein fuzzy homolog (415 aa).

The protein belongs to the fuzzy family. Component of the CPLANE (ciliogenesis and planar polarity effectors) complex, composed of INTU, FUZ and WDPCP. Interacts with CPLANE1 and CPLANE2.

It is found in the cytoplasm. The protein localises to the cytoskeleton. It localises to the cilium basal body. Probable planar cell polarity effector involved in cilium biogenesis. Proposed to function as core component of the CPLANE (ciliogenesis and planar polarity effectors) complex involved in the recruitment of peripheral IFT-A proteins to basal bodies. May regulate protein and membrane transport to the cilium. May regulate the morphogenesis of hair follicles which depends on functional primary cilia. Binds phosphatidylinositol 3-phosphate with highest affinity, followed by phosphatidylinositol 4-phosphate and phosphatidylinositol 5-phosphate. The chain is Protein fuzzy homolog (Fuz) from Rattus norvegicus (Rat).